The chain runs to 597 residues: Putative heat shock protein HSP 90-beta-3 (597 aa).

Positions 46, 88, and 107 each coordinate ATP. Residues 201 to 241 (DKEISDDEAEEEKGEKEEEDKDDEEKPKIKDVGSDEEDDSK) are disordered. Positions 204-223 (ISDDEAEEEKGEKEEEDKDD) are enriched in acidic residues. Positions 224-233 (EEKPKIKDVG) are enriched in basic and acidic residues. Arginine 334 is a binding site for ATP. Positions 414 to 446 (LELPEDEEEKKKMEESKEKFENLCKLMKEILDK) form a coiled coil. The segment covering 564 to 578 (DEDEVAAEEPSDAVP) has biased composition (acidic residues). The disordered stretch occupies residues 564 to 597 (DEDEVAAEEPSDAVPDEIPPLEGDEDASRMEEVD). Residues 593–597 (MEEVD) carry the TPR repeat-binding motif.

It belongs to the heat shock protein 90 family. Homodimer.

It localises to the cytoplasm. Its function is as follows. Putative molecular chaperone that may promote the maturation, structural maintenance and proper regulation of specific target proteins. This Homo sapiens (Human) protein is Putative heat shock protein HSP 90-beta-3 (HSP90AB3P).